Reading from the N-terminus, the 248-residue chain is 5'-nucleotidase SurE (248 aa).

Residues Asp-8, Asp-9, Ser-39, and Asn-91 each contribute to the a divalent metal cation site.

Belongs to the SurE nucleotidase family. It depends on a divalent metal cation as a cofactor.

It is found in the cytoplasm. It carries out the reaction a ribonucleoside 5'-phosphate + H2O = a ribonucleoside + phosphate. Its function is as follows. Nucleotidase that shows phosphatase activity on nucleoside 5'-monophosphates. The sequence is that of 5'-nucleotidase SurE from Neisseria meningitidis serogroup C / serotype 2a (strain ATCC 700532 / DSM 15464 / FAM18).